The primary structure comprises 60 residues: Large ribosomal subunit protein uL30 (60 aa).

The protein belongs to the universal ribosomal protein uL30 family. As to quaternary structure, part of the 50S ribosomal subunit.

The polypeptide is Large ribosomal subunit protein uL30 (Desulfotalea psychrophila (strain LSv54 / DSM 12343)).